The following is a 242-amino-acid chain: Ubiquinone biosynthesis O-methyltransferase (242 aa).

Residues R44, G64, D85, and M129 each coordinate S-adenosyl-L-methionine.

Belongs to the methyltransferase superfamily. UbiG/COQ3 family.

The catalysed reaction is a 3-demethylubiquinol + S-adenosyl-L-methionine = a ubiquinol + S-adenosyl-L-homocysteine + H(+). It carries out the reaction a 3-(all-trans-polyprenyl)benzene-1,2-diol + S-adenosyl-L-methionine = a 2-methoxy-6-(all-trans-polyprenyl)phenol + S-adenosyl-L-homocysteine + H(+). It functions in the pathway cofactor biosynthesis; ubiquinone biosynthesis. O-methyltransferase that catalyzes the 2 O-methylation steps in the ubiquinone biosynthetic pathway. The protein is Ubiquinone biosynthesis O-methyltransferase of Salmonella agona (strain SL483).